The primary structure comprises 311 residues: MDDSRKAYVVAQDLHNAIMQRDAITISEITGRYVSGYREKIALAFMEQYNVLPADLFKEWGTGYFESLMIRCWTNRHEARAKMLKEAIRGALDRDALVDLVILCSTDDWASTLVHYQKHFRIALKADIRLNMPADRPWKALIDRWMEHDRHYRNNVKTDAHMLLQALEGGNGAAIVDILVTTKPQEWEKIVAAYEEHTNKSLETAICMAFPGFEQTAFCAAHYWLCEPSKAAAFLIHRACEGKRGDFRRVCRITSLVLDQCLKCKYVYSVYGHLAADFRKTFSDNTAIPLISLWRAYDIGKILAEKHENIT.

Annexin repeat units follow at residues 5–73, 75–146, 154–223, and 227–295; these read RKAY…IRCW, NRHE…DRWM, NNVK…AAHY, and EPSK…SLWR.

Belongs to the annexin family. Giardin subunit alpha subfamily.

The protein resides in the cytoplasm. The protein localises to the cytoskeleton. Its function is as follows. Giardins are involved in parasite attachment to the intestinal mucosa and in the cytoskeletal disassembly and reassembly that marks the transition from infectious trophozoite to transmissible cyst. They may interact with other cytoskeletal proteins such as microtubules in the microribbons or crossbridges, to maintain the integrity of the ventral disk. This is Giardin subunit alpha-8 from Giardia intestinalis (Giardia lamblia).